Consider the following 178-residue polypeptide: Cytochrome b6-f complex iron-sulfur subunit (178 aa).

The helical transmembrane segment at 20–42 threads the bilayer; the sequence is LLTFGSVTGVALGALYPVANYFI. The Rieske domain occupies 65–161; it reads ASGWLSSHPE…VSVENDNVFV (97 aa). [2Fe-2S] cluster is bound by residues Cys-107, His-109, Cys-125, and His-128. Cys-112 and Cys-127 are joined by a disulfide.

This sequence belongs to the Rieske iron-sulfur protein family. The 4 large subunits of the cytochrome b6-f complex are cytochrome b6, subunit IV (17 kDa polypeptide, PetD), cytochrome f and the Rieske protein, while the 4 small subunits are PetG, PetL, PetM and PetN. The complex functions as a dimer. [2Fe-2S] cluster serves as cofactor.

The protein localises to the cellular thylakoid membrane. It catalyses the reaction 2 oxidized [plastocyanin] + a plastoquinol + 2 H(+)(in) = 2 reduced [plastocyanin] + a plastoquinone + 4 H(+)(out). In terms of biological role, component of the cytochrome b6-f complex, which mediates electron transfer between photosystem II (PSII) and photosystem I (PSI), cyclic electron flow around PSI, and state transitions. In Synechococcus sp. (strain CC9605), this protein is Cytochrome b6-f complex iron-sulfur subunit.